The sequence spans 256 residues: uncharacterized protein (256 aa).

A run of 3 helical transmembrane segments spans residues 42-62, 73-93, and 108-128; these read LIAL…IWFF, FFTL…LIFL, and WLFL…WLIV.

The protein resides in the cell membrane. This is an uncharacterized protein from Mycoplasma genitalium (strain ATCC 33530 / DSM 19775 / NCTC 10195 / G37) (Mycoplasmoides genitalium).